A 137-amino-acid chain; its full sequence is Fluoride-specific ion channel FluC 4 (137 aa).

The next 4 membrane-spanning stretches (helical) occupy residues 20–40 (AAIG…ILGA), 43–63 (LWGT…FATL), 83–103 (GLCG…LLVL), and 110–130 (ALAY…LGLI). Gly-86 and Thr-89 together coordinate Na(+).

Belongs to the fluoride channel Fluc/FEX (TC 1.A.43) family.

The protein resides in the cell inner membrane. It catalyses the reaction fluoride(in) = fluoride(out). Na(+) is not transported, but it plays an essential structural role and its presence is essential for fluoride channel function. Fluoride-specific ion channel. Important for reducing fluoride concentration in the cell, thus reducing its toxicity. The protein is Fluoride-specific ion channel FluC 4 of Brucella suis biovar 1 (strain 1330).